Consider the following 234-residue polypeptide: Segregation and condensation protein A (234 aa).

It belongs to the ScpA family. As to quaternary structure, component of a cohesin-like complex composed of ScpA, ScpB and the Smc homodimer, in which ScpA and ScpB bind to the head domain of Smc. The presence of the three proteins is required for the association of the complex with DNA.

The protein localises to the cytoplasm. Participates in chromosomal partition during cell division. May act via the formation of a condensin-like complex containing Smc and ScpB that pull DNA away from mid-cell into both cell halves. The chain is Segregation and condensation protein A from Streptococcus pyogenes serotype M3 (strain ATCC BAA-595 / MGAS315).